The primary structure comprises 225 residues: Protein-L-isoaspartate O-methyltransferase (225 aa).

The active site involves Ser75.

It belongs to the methyltransferase superfamily. L-isoaspartyl/D-aspartyl protein methyltransferase family.

The protein localises to the cytoplasm. It catalyses the reaction [protein]-L-isoaspartate + S-adenosyl-L-methionine = [protein]-L-isoaspartate alpha-methyl ester + S-adenosyl-L-homocysteine. Catalyzes the methyl esterification of L-isoaspartyl residues in peptides and proteins that result from spontaneous decomposition of normal L-aspartyl and L-asparaginyl residues. It plays a role in the repair and/or degradation of damaged proteins. This is Protein-L-isoaspartate O-methyltransferase from Stenotrophomonas maltophilia (strain R551-3).